A 292-amino-acid chain; its full sequence is Diaminopimelate epimerase (292 aa).

Substrate-binding residues include N13, Q46, and N66. The Proton donor role is filled by C75. Substrate-binding positions include 76–77 (GN), N170, N203, and 221–222 (ER). The active-site Proton acceptor is C230. A substrate-binding site is contributed by 231-232 (GT).

The protein belongs to the diaminopimelate epimerase family. In terms of assembly, homodimer.

Its subcellular location is the cytoplasm. The catalysed reaction is (2S,6S)-2,6-diaminopimelate = meso-2,6-diaminopimelate. The protein operates within amino-acid biosynthesis; L-lysine biosynthesis via DAP pathway; DL-2,6-diaminopimelate from LL-2,6-diaminopimelate: step 1/1. Catalyzes the stereoinversion of LL-2,6-diaminopimelate (L,L-DAP) to meso-diaminopimelate (meso-DAP), a precursor of L-lysine and an essential component of the bacterial peptidoglycan. This chain is Diaminopimelate epimerase, found in Acidovorax ebreus (strain TPSY) (Diaphorobacter sp. (strain TPSY)).